The sequence spans 203 residues: MADVLRLVVGLGNPGTKYEGTRHNIGFMALEQMASREGFSFRQQSKLHGLVAEHGIGESRLRLLMPQTYMNDSGRSIRAALDWFGFTPEQLLVLVDDMDIPLGRLRLRGQGSAGGHNGLRSTIQHLGTQAFPRLRIGIGAPADNPAERRARTVSHVLGSFSRAEQPEVDVVLDGVLEAIQRIQRQGLDRAGNWINGFCPASVE.

Tyrosine 18 provides a ligand contact to tRNA. Histidine 23 (proton acceptor) is an active-site residue. TRNA is bound by residues tyrosine 69, asparagine 71, and asparagine 117.

The protein belongs to the PTH family. In terms of assembly, monomer.

Its subcellular location is the cytoplasm. The enzyme catalyses an N-acyl-L-alpha-aminoacyl-tRNA + H2O = an N-acyl-L-amino acid + a tRNA + H(+). Functionally, hydrolyzes ribosome-free peptidyl-tRNAs (with 1 or more amino acids incorporated), which drop off the ribosome during protein synthesis, or as a result of ribosome stalling. In terms of biological role, catalyzes the release of premature peptidyl moieties from peptidyl-tRNA molecules trapped in stalled 50S ribosomal subunits, and thus maintains levels of free tRNAs and 50S ribosomes. The protein is Peptidyl-tRNA hydrolase of Parasynechococcus marenigrum (strain WH8102).